The chain runs to 115 residues: U3-lycotoxin-Ls1k (115 aa).

The signal sequence occupies residues 1-20 (MKFVLLFGVLVVTLFSYSSA). The propeptide occupies 21–44 (EMLDDFDQADEDELLSLIEKEEAR). Intrachain disulfides connect cysteine 48–cysteine 63, cysteine 55–cysteine 72, cysteine 62–cysteine 87, and cysteine 74–cysteine 85.

It belongs to the neurotoxin 19 (CSTX) family. 01 subfamily. In terms of tissue distribution, expressed by the venom gland.

The protein localises to the secreted. This chain is U3-lycotoxin-Ls1k, found in Lycosa singoriensis (Wolf spider).